A 116-amino-acid chain; its full sequence is Aspartate 1-decarboxylase (116 aa).

Ser-25 functions as the Schiff-base intermediate with substrate; via pyruvic acid in the catalytic mechanism. Residue Ser-25 is modified to Pyruvic acid (Ser). Residue Thr-57 participates in substrate binding. Tyr-58 (proton donor) is an active-site residue. 73 to 75 (GAA) lines the substrate pocket.

Belongs to the PanD family. As to quaternary structure, heterooctamer of four alpha and four beta subunits. Pyruvate is required as a cofactor. Post-translationally, is synthesized initially as an inactive proenzyme, which is activated by self-cleavage at a specific serine bond to produce a beta-subunit with a hydroxyl group at its C-terminus and an alpha-subunit with a pyruvoyl group at its N-terminus.

It localises to the cytoplasm. The enzyme catalyses L-aspartate + H(+) = beta-alanine + CO2. Its pathway is cofactor biosynthesis; (R)-pantothenate biosynthesis; beta-alanine from L-aspartate: step 1/1. Functionally, catalyzes the pyruvoyl-dependent decarboxylation of aspartate to produce beta-alanine. This is Aspartate 1-decarboxylase from Parabacteroides distasonis (strain ATCC 8503 / DSM 20701 / CIP 104284 / JCM 5825 / NCTC 11152).